Reading from the N-terminus, the 121-residue chain is Large ribosomal subunit protein uL14c (121 aa).

The protein belongs to the universal ribosomal protein uL14 family. Part of the 50S ribosomal subunit.

Its subcellular location is the plastid. The protein localises to the chloroplast. In terms of biological role, binds to 23S rRNA. The chain is Large ribosomal subunit protein uL14c from Phaeodactylum tricornutum (strain CCAP 1055/1).